A 137-amino-acid chain; its full sequence is Ribosomal RNA large subunit methyltransferase H (137 aa).

Residues Leu56, Gly85, and 104-109 each bind S-adenosyl-L-methionine; that span reads LSPLTF.

Belongs to the RNA methyltransferase RlmH family. As to quaternary structure, homodimer.

The protein localises to the cytoplasm. The enzyme catalyses pseudouridine(1915) in 23S rRNA + S-adenosyl-L-methionine = N(3)-methylpseudouridine(1915) in 23S rRNA + S-adenosyl-L-homocysteine + H(+). Specifically methylates the pseudouridine at position 1915 (m3Psi1915) in 23S rRNA. The protein is Ribosomal RNA large subunit methyltransferase H of Prochlorococcus marinus (strain MIT 9515).